A 971-amino-acid polypeptide reads, in one-letter code: Lon protease homolog, mitochondrial (971 aa).

Residues 1–55 constitute a mitochondrion transit peptide; sequence MYRAGAVLLRGATRTRLLAAASAHQSFATFSQRNQSILMMKSMELAGNSGERRFY. In terms of domain architecture, Lon N-terminal spans 89–359; that stretch reads VPMLAINRYP…IALLLIQKEK (271 aa). Residues 190 to 255 form a disordered region; that stretch reads TPKNETPLNG…PPSATGEKQK (66 aa). Pro residues predominate over residues 214 to 224; sequence LTPPPSPPPLA. 512-519 is an ATP binding site; that stretch reads GPPGVGKT. The segment at 718 to 749 is disordered; sequence AEQQNEDEEPAEKATTAITENSEAEPITSTSS. Polar residues predominate over residues 733–749; the sequence is TAITENSEAEPITSTSS. The 188-residue stretch at 784–971 folds into the Lon proteolytic domain; it reads VTPPGVIMGL…YDELYEHLFQ (188 aa). Catalysis depends on residues Ser878 and Lys921.

Belongs to the peptidase S16 family. As to quaternary structure, homohexamer or homoheptamer. Organized in a ring with a central cavity.

Its subcellular location is the mitochondrion matrix. It catalyses the reaction Hydrolysis of proteins in presence of ATP.. ATP-dependent serine protease that mediates the selective degradation of misfolded, unassembled or oxidatively damaged polypeptides as well as certain short-lived regulatory proteins in the mitochondrial matrix. May also have a chaperone function in the assembly of inner membrane protein complexes. Participates in the regulation of mitochondrial gene expression and in the maintenance of the integrity of the mitochondrial genome. Binds to mitochondrial DNA in a site-specific manner. Involved in the degradation of transcription factor atfs-1 in the mitochondrion. This Caenorhabditis elegans protein is Lon protease homolog, mitochondrial.